The following is a 328-amino-acid chain: Methionyl-tRNA formyltransferase (328 aa).

110 to 113 (SNLP) provides a ligand contact to (6S)-5,6,7,8-tetrahydrofolate.

It belongs to the Fmt family.

The catalysed reaction is L-methionyl-tRNA(fMet) + (6R)-10-formyltetrahydrofolate = N-formyl-L-methionyl-tRNA(fMet) + (6S)-5,6,7,8-tetrahydrofolate + H(+). In terms of biological role, attaches a formyl group to the free amino group of methionyl-tRNA(fMet). The formyl group appears to play a dual role in the initiator identity of N-formylmethionyl-tRNA by promoting its recognition by IF2 and preventing the misappropriation of this tRNA by the elongation apparatus. This Bifidobacterium longum (strain DJO10A) protein is Methionyl-tRNA formyltransferase.